The following is a 306-amino-acid chain: Ribosomal protein L11 methyltransferase (306 aa).

4 residues coordinate S-adenosyl-L-methionine: T154, G179, D201, and N242.

The protein belongs to the methyltransferase superfamily. PrmA family.

The protein resides in the cytoplasm. It carries out the reaction L-lysyl-[protein] + 3 S-adenosyl-L-methionine = N(6),N(6),N(6)-trimethyl-L-lysyl-[protein] + 3 S-adenosyl-L-homocysteine + 3 H(+). Methylates ribosomal protein L11. This Stenotrophomonas maltophilia (strain K279a) protein is Ribosomal protein L11 methyltransferase.